Consider the following 361-residue polypeptide: MQVLPDIKAPCDALASPSLEPYPQSSITVTLEDMGLWMKFHQIGTEMIITKSGRRMFPQCKIKVSGLIPYAKYLMLVDFVPVDNFRYKWNKDQWEVAGKAEPQLPCRTYVHPDSPAPGSHWMKEPVSFQKLKLTNNTLDQHGHIILHSMHRYKPRFHIVQADDLFSVRWSIFQVFSFPETVFTSVTAYQNEQITKLKIDNNPFAKGFREHGKNTRREGRAKSQKPSPAKGQKRKLPEEKESGAEERDFEKDENVDVKEESNPIVVSSGYPFWISEQNSSHAFPAASPAPAEQREGPAREQQVPTPSYQTYRFHEAGDSQQLPSRDVAALNDFRGRCHPLDLATVPEHDSKQLPEGFTNLPP.

Residues 36 to 209 (LWMKFHQIGT…NNPFAKGFRE (174 aa)) constitute a DNA-binding region (T-box). Disordered stretches follow at residues 203 to 259 (FAKG…VKEE) and 280 to 323 (HAFP…QLPS). Basic and acidic residues-rich tracts occupy residues 206-220 (GFRE…EGRA) and 234-259 (KLPE…VKEE). Low complexity predominate over residues 280 to 290 (HAFPAASPAPA).

It localises to the nucleus. In terms of biological role, may be involved in regulating somitogenesis. This chain is T-box-containing protein TBX6L (TBX6L), found in Gallus gallus (Chicken).